The following is a 332-amino-acid chain: NADH-quinone oxidoreductase subunit H (332 aa).

Helical transmembrane passes span Phe4–Ser24, Ile44–Leu64, Phe78–Ile98, Val120–Gly140, Val165–Ile185, Phe194–Ile214, Ile255–Ile275, Ile279–Phe299, and Tyr312–Leu332.

Belongs to the complex I subunit 1 family. In terms of assembly, NDH-1 is composed of 14 different subunits. Subunits NuoA, H, J, K, L, M, N constitute the membrane sector of the complex.

It localises to the cell inner membrane. It catalyses the reaction a quinone + NADH + 5 H(+)(in) = a quinol + NAD(+) + 4 H(+)(out). Its function is as follows. NDH-1 shuttles electrons from NADH, via FMN and iron-sulfur (Fe-S) centers, to quinones in the respiratory chain. The immediate electron acceptor for the enzyme in this species is believed to be ubiquinone. Couples the redox reaction to proton translocation (for every two electrons transferred, four hydrogen ions are translocated across the cytoplasmic membrane), and thus conserves the redox energy in a proton gradient. This subunit may bind ubiquinone. The sequence is that of NADH-quinone oxidoreductase subunit H from Campylobacter jejuni subsp. jejuni serotype O:23/36 (strain 81-176).